The chain runs to 349 residues: Nicotinate-nucleotide--dimethylbenzimidazole phosphoribosyltransferase (349 aa).

The interval 1–20 is disordered; the sequence is MEFATVSPPDPGTAAAARAR. Glu313 (proton acceptor) is an active-site residue.

The protein belongs to the CobT family.

It catalyses the reaction 5,6-dimethylbenzimidazole + nicotinate beta-D-ribonucleotide = alpha-ribazole 5'-phosphate + nicotinate + H(+). The protein operates within nucleoside biosynthesis; alpha-ribazole biosynthesis; alpha-ribazole from 5,6-dimethylbenzimidazole: step 1/2. Its function is as follows. Catalyzes the synthesis of alpha-ribazole-5'-phosphate from nicotinate mononucleotide (NAMN) and 5,6-dimethylbenzimidazole (DMB). The chain is Nicotinate-nucleotide--dimethylbenzimidazole phosphoribosyltransferase from Mycolicibacterium paratuberculosis (strain ATCC BAA-968 / K-10) (Mycobacterium paratuberculosis).